The sequence spans 387 residues: Phosphoglycerate kinase (387 aa).

Residues 21-23 (DLN), Arg-36, 59-62 (HLGR), Arg-113, and Arg-146 contribute to the substrate site. Residues Lys-197, Glu-314, and 340 to 343 (GGDT) contribute to the ATP site.

This sequence belongs to the phosphoglycerate kinase family. As to quaternary structure, monomer.

It is found in the cytoplasm. The enzyme catalyses (2R)-3-phosphoglycerate + ATP = (2R)-3-phospho-glyceroyl phosphate + ADP. It functions in the pathway carbohydrate degradation; glycolysis; pyruvate from D-glyceraldehyde 3-phosphate: step 2/5. In Pseudomonas savastanoi pv. phaseolicola (strain 1448A / Race 6) (Pseudomonas syringae pv. phaseolicola (strain 1448A / Race 6)), this protein is Phosphoglycerate kinase.